Consider the following 550-residue polypeptide: Arginine--tRNA ligase (550 aa).

The 'HIGH' region signature appears at 130-140 (ANPTGPIHIGG).

It belongs to the class-I aminoacyl-tRNA synthetase family. As to quaternary structure, monomer.

The protein localises to the cytoplasm. The catalysed reaction is tRNA(Arg) + L-arginine + ATP = L-arginyl-tRNA(Arg) + AMP + diphosphate. The chain is Arginine--tRNA ligase (argS) from Mycobacterium tuberculosis (strain CDC 1551 / Oshkosh).